Consider the following 494-residue polypeptide: Ubiquitin carboxyl-terminal hydrolase 27 (494 aa).

The chain crosses the membrane as a helical span at residues 30 to 50 (LSFAGLLGVAGFVFAQQHGLF). The USP domain maps to 74-494 (PGLQNLGNNC…EASLLFYERL (421 aa)). C83 acts as the Nucleophile in catalysis. H440 (proton acceptor) is an active-site residue.

This sequence belongs to the peptidase C19 family.

It localises to the membrane. It catalyses the reaction Thiol-dependent hydrolysis of ester, thioester, amide, peptide and isopeptide bonds formed by the C-terminal Gly of ubiquitin (a 76-residue protein attached to proteins as an intracellular targeting signal).. Its function is as follows. Recognizes and hydrolyzes the peptide bond at the C-terminal Gly of ubiquitin. Involved in the processing of poly-ubiquitin precursors as well as that of ubiquitinated proteins. In Arabidopsis thaliana (Mouse-ear cress), this protein is Ubiquitin carboxyl-terminal hydrolase 27 (UBP27).